Here is a 353-residue protein sequence, read N- to C-terminus: Farnesyl pyrophosphate synthase (353 aa).

Isopentenyl diphosphate is bound by residues Lys57, Arg60, and Gln96. N6-(2-hydroxyisobutyryl)lysine; alternate is present on Lys57. At Lys57 the chain carries N6-acetyllysine; alternate. Asp103 and Asp107 together coordinate Mg(2+). A dimethylallyl diphosphate-binding site is contributed by Arg112. Arg113 contributes to the isopentenyl diphosphate binding site. Dimethylallyl diphosphate contacts are provided by Lys200, Thr201, Gln240, Lys257, and Lys266.

Belongs to the FPP/GGPP synthase family. Homodimer. Interacts with RSAD2. Mg(2+) is required as a cofactor.

The protein resides in the cytoplasm. It catalyses the reaction isopentenyl diphosphate + dimethylallyl diphosphate = (2E)-geranyl diphosphate + diphosphate. It carries out the reaction isopentenyl diphosphate + (2E)-geranyl diphosphate = (2E,6E)-farnesyl diphosphate + diphosphate. It functions in the pathway isoprenoid biosynthesis; farnesyl diphosphate biosynthesis; farnesyl diphosphate from geranyl diphosphate and isopentenyl diphosphate: step 1/1. The protein operates within isoprenoid biosynthesis; geranyl diphosphate biosynthesis; geranyl diphosphate from dimethylallyl diphosphate and isopentenyl diphosphate: step 1/1. With respect to regulation, inactivated by interferon-induced RSAD2. This inactivation may result of disruption of lipid rafts at the plasma membrane, and thus have an antiviral effect since many enveloped viruses need lipid rafts to bud efficiently out of the cell. Functionally, key enzyme in isoprenoid biosynthesis which catalyzes the formation of farnesyl diphosphate (FPP), a precursor for several classes of essential metabolites including sterols, dolichols, carotenoids, and ubiquinones. FPP also serves as substrate for protein farnesylation and geranylgeranylation. Catalyzes the sequential condensation of isopentenyl pyrophosphate with the allylic pyrophosphates, dimethylallyl pyrophosphate, and then with the resultant geranylpyrophosphate to the ultimate product farnesyl pyrophosphate. In Mus musculus (Mouse), this protein is Farnesyl pyrophosphate synthase (Fdps).